Reading from the N-terminus, the 125-residue chain is Fumarate reductase subunit D (125 aa).

Helical transmembrane passes span 30–50 (FAMI…MGVI), 60–80 (VVSF…LALP), and 105–125 (IACY…IFML).

This sequence belongs to the FrdD family. Part of an enzyme complex containing four subunits: a flavoprotein (FrdA), an iron-sulfur protein (FrdB), and two hydrophobic anchor proteins (FrdC and FrdD).

The protein localises to the cell inner membrane. In terms of biological role, anchors the catalytic components of the fumarate reductase complex to the cell membrane, binds quinones. In Vibrio vulnificus (strain YJ016), this protein is Fumarate reductase subunit D.